The chain runs to 962 residues: RNA-binding protein 15 (962 aa).

Composition is skewed to basic and acidic residues over residues 1-10 (MRSAGREPLP), 34-52 (LRRDDLRRPSTMKGKERSP), and 59-72 (RGGEDSSSRGERSK). Residues 1–167 (MRSAGREPLP…SAPGGGDGVE (167 aa)) form a disordered region. The segment covering 82–94 (GSSSGKTDSGGSR) has biased composition (low complexity). Residues 97 to 112 (LHLDKSSSRGGSREYE) show a composition bias toward basic and acidic residues. Serine 108 bears the Phosphoserine mark. Residues 118 to 129 (SSSRLHSYSSPS) are compositionally biased toward low complexity. Positions 134–149 (SGGGESRSSSRGGGGE) are enriched in gly residues. Over residues 150 to 159 (SRSSGAASSA) the composition is skewed to low complexity. Positions 169–251 (KTLKISELGS…RPLKIEAVYV (83 aa)) constitute an RRM 1 domain. Phosphoserine occurs at positions 178, 207, and 209. Residue lysine 245 forms a Glycyl lysine isopeptide (Lys-Gly) (interchain with G-Cter in SUMO2) linkage. Phosphoserine is present on residues serine 252, serine 256, and serine 258. The interval 257–297 (RSPLDKDAYAPSSSVVGTSVGSHRHAPGGGGGQRSLSPGGA) is disordered. Tyrosine 265 is modified (phosphotyrosine). A compositionally biased stretch (low complexity) spans 268 to 277 (SSSVVGTSVG). A phosphoserine mark is found at serine 291, serine 293, and serine 364. RRM domains lie at 373–450 (RTLF…YGKA) and 454–528 (TRLW…FADT). Glycyl lysine isopeptide (Lys-Gly) (interchain with G-Cter in SUMO2) cross-links involve residues lysine 405, lysine 419, and lysine 444. An N6-acetyllysine modification is found at lysine 449. Composition is skewed to basic and acidic residues over residues 553 to 580 (GHRAPDPLRSARDRTPPLLYRDRDRDLY) and 612 to 661 (SLDR…SERP). Positions 553-779 (GHRAPDPLRS…KQDGGTAPVA (227 aa)) are disordered. Position 567 is a phosphothreonine (threonine 567). Arginine 577 is subject to Asymmetric dimethylarginine; alternate; by PRMT1. An Omega-N-methylarginine; alternate; by PRMT1 modification is found at arginine 577. Residues serine 621, serine 655, serine 670, serine 674, and serine 701 each carry the phosphoserine modification. Composition is skewed to basic and acidic residues over residues 673-692 (RSPELSSNRDRYNSDNDRSS), 701-729 (SPVRDRRGSLEKSQSDKRDRKNSASAERD), and 742-751 (NPLKKEDRSD). Residue lysine 745 forms a Glycyl lysine isopeptide (Lys-Gly) (interchain with G-Cter in SUMO2) linkage. A compositionally biased stretch (low complexity) spans 754–771 (APSASTSSSKQKPPSQKQ). Residues serine 768 and serine 782 each carry the phosphoserine modification. The SPOC domain maps to 778–957 (VAASSPKLCL…YLVMIIVRAK (180 aa)). Residues 866-885 (GSSDSRSSSSSATSDTAAST) are disordered. The span at 867-885 (SSDSRSSSSSATSDTAAST) shows a compositional bias: low complexity. Serine 936 carries the phosphoserine modification.

The protein belongs to the RRM Spen family. As to quaternary structure, component of the WMM complex, a N6-methyltransferase complex composed of a catalytic subcomplex, named MAC, and of an associated subcomplex, named MACOM. The MAC subcomplex is composed of METTL3 and METTL14. The MACOM subcomplex is composed of WTAP, ZC3H13, CBLL1/HAKAI, VIRMA, and, in some cases of RBM15 (RBM15 or RBM15B). Also a component of a MACOM-like complex, named WTAP complex, composed of WTAP, ZC3H13, CBLL1, VIRMA, RBM15, BCLAF1 and THRAP3. Interacts with RBPJ. Interacts (via SPOC domain) with SETD1B. Interacts with NXF1, the interaction is required to promote mRNA export. Interacts with SF3B1. In terms of processing, methylated at Arg-577 by PRMT1, leading to promote ubiquitination by CNOT4 and subsequent degradation by the proteasome. Post-translationally, ubiquitinated by CNOT4 following methylation at Arg-577 by PRMT1.

It is found in the nucleus speckle. The protein resides in the nucleus. It localises to the nucleoplasm. Its subcellular location is the nucleus envelope. The protein localises to the nucleus membrane. In terms of biological role, RNA-binding protein that acts as a key regulator of N6-methyladenosine (m6A) methylation of RNAs, thereby regulating different processes, such as hematopoietic cell homeostasis, alternative splicing of mRNAs and X chromosome inactivation mediated by Xist RNA. Associated component of the WMM complex, a complex that mediates N6-methyladenosine (m6A) methylation of RNAs, a modification that plays a role in the efficiency of mRNA splicing and RNA processing. Plays a key role in m6A methylation, possibly by binding target RNAs and recruiting the WMM complex. Involved in random X inactivation mediated by Xist RNA: acts by binding Xist RNA and recruiting the WMM complex, which mediates m6A methylation, leading to target YTHDC1 reader on Xist RNA and promoting transcription repression activity of Xist. Required for the development of multiple tissues, such as the maintenance of the homeostasis of long-term hematopoietic stem cells and for megakaryocyte (MK) and B-cell differentiation. Regulates megakaryocyte differentiation by regulating alternative splicing of genes important for megakaryocyte differentiation; probably regulates alternative splicing via m6A regulation. Required for placental vascular branching morphogenesis and embryonic development of the heart and spleen. Acts as a regulator of thrombopoietin response in hematopoietic stem cells by regulating alternative splicing of MPL. May also function as an mRNA export factor, stimulating export and expression of RTE-containing mRNAs which are present in many retrotransposons that require to be exported prior to splicing. High affinity binding of pre-mRNA to RBM15 may allow targeting of the mRNP to the export helicase DBP5 in a manner that is independent of splicing-mediated NXF1 deposition, resulting in export prior to splicing. May be implicated in HOX gene regulation. The polypeptide is RNA-binding protein 15 (Mus musculus (Mouse)).